The following is a 443-amino-acid chain: 3-isopropylmalate dehydratase large subunit (443 aa).

Positions 347, 407, and 410 each coordinate [4Fe-4S] cluster.

The protein belongs to the aconitase/IPM isomerase family. LeuC type 1 subfamily. In terms of assembly, heterodimer of LeuC and LeuD. Requires [4Fe-4S] cluster as cofactor.

The catalysed reaction is (2R,3S)-3-isopropylmalate = (2S)-2-isopropylmalate. The protein operates within amino-acid biosynthesis; L-leucine biosynthesis; L-leucine from 3-methyl-2-oxobutanoate: step 2/4. In terms of biological role, catalyzes the isomerization between 2-isopropylmalate and 3-isopropylmalate, via the formation of 2-isopropylmaleate. The polypeptide is 3-isopropylmalate dehydratase large subunit (Buchnera aphidicola subsp. Uroleucon aeneum).